A 347-amino-acid polypeptide reads, in one-letter code: Ferrochelatase (347 aa).

Fe cation contacts are provided by His193 and Glu273.

This sequence belongs to the ferrochelatase family.

It is found in the cytoplasm. It carries out the reaction heme b + 2 H(+) = protoporphyrin IX + Fe(2+). Its pathway is porphyrin-containing compound metabolism; protoheme biosynthesis; protoheme from protoporphyrin-IX: step 1/1. Its function is as follows. Catalyzes the ferrous insertion into protoporphyrin IX. In Rickettsia canadensis (strain McKiel), this protein is Ferrochelatase.